The following is a 355-amino-acid chain: UDP-N-acetylglucosamine--N-acetylmuramyl-(pentapeptide) pyrophosphoryl-undecaprenol N-acetylglucosamine transferase (355 aa).

UDP-N-acetyl-alpha-D-glucosamine is bound by residues 15–17, N127, R163, S191, I244, 263–268, and Q288; these read TGG and ALTVSE.

This sequence belongs to the glycosyltransferase 28 family. MurG subfamily.

It is found in the cell inner membrane. It carries out the reaction di-trans,octa-cis-undecaprenyl diphospho-N-acetyl-alpha-D-muramoyl-L-alanyl-D-glutamyl-meso-2,6-diaminopimeloyl-D-alanyl-D-alanine + UDP-N-acetyl-alpha-D-glucosamine = di-trans,octa-cis-undecaprenyl diphospho-[N-acetyl-alpha-D-glucosaminyl-(1-&gt;4)]-N-acetyl-alpha-D-muramoyl-L-alanyl-D-glutamyl-meso-2,6-diaminopimeloyl-D-alanyl-D-alanine + UDP + H(+). It participates in cell wall biogenesis; peptidoglycan biosynthesis. Its function is as follows. Cell wall formation. Catalyzes the transfer of a GlcNAc subunit on undecaprenyl-pyrophosphoryl-MurNAc-pentapeptide (lipid intermediate I) to form undecaprenyl-pyrophosphoryl-MurNAc-(pentapeptide)GlcNAc (lipid intermediate II). The polypeptide is UDP-N-acetylglucosamine--N-acetylmuramyl-(pentapeptide) pyrophosphoryl-undecaprenol N-acetylglucosamine transferase (Salmonella choleraesuis (strain SC-B67)).